Reading from the N-terminus, the 310-residue chain is MDKIFVEEAVAELHTLQDMLRWTVSRFNAAGLFYGHGTDNAWDEAVQLVLPTLYLPIDVPAHVRESRLTSTERLRIVERVVRRINERIPTAYLTNKAWFCGLEFFVDERVLVPRSPIAELIETQFEPWLTEEPTRIMDLCTGSGCIAIACAHAFPNAEVDAIDISTDALMVAEQNVQDHGMEQQVFPIRSDLLRDIPKDQYNFIVSNPPYVDEEDMNSLPEEFEHEPELGLAAGTDGLKLVRRILANAPDYLMDNGFLICEVGNSMVHMMEQYPDIPFTWIEFAEGGHGVFMLTKQQLLDCADEFALYRD.

This sequence belongs to the protein N5-glutamine methyltransferase family. PrmB subfamily.

The catalysed reaction is L-glutaminyl-[ribosomal protein uL3] + S-adenosyl-L-methionine = N(5)-methyl-L-glutaminyl-[ribosomal protein uL3] + S-adenosyl-L-homocysteine + H(+). Functionally, methylates large ribosomal subunit protein uL3 on a specific glutamine residue. The polypeptide is Ribosomal protein uL3 glutamine methyltransferase (Aliivibrio fischeri (strain ATCC 700601 / ES114) (Vibrio fischeri)).